Here is a 189-residue protein sequence, read N- to C-terminus: Thermostable direct hemolysin 1 (189 aa).

The first 24 residues, 1–24, serve as a signal peptide directing secretion; the sequence is MKHQYFAKKSFLFISMLAAFKTSA. The cysteines at positions 175 and 185 are disulfide-linked.

The protein belongs to the TDH hemolysin family. As to quaternary structure, homodimer.

Functionally, bacterial hemolysins are exotoxins that attack blood cell membranes and cause cell rupture by mechanisms not clearly defined. This chain is Thermostable direct hemolysin 1 (tdh1), found in Vibrio parahaemolyticus serotype O3:K6 (strain RIMD 2210633).